Reading from the N-terminus, the 400-residue chain is Acetylornithine aminotransferase (400 aa).

Residues 106 to 107 and phenylalanine 132 contribute to the pyridoxal 5'-phosphate site; that span reads GA. Position 135 (arginine 135) interacts with N(2)-acetyl-L-ornithine. A pyridoxal 5'-phosphate-binding site is contributed by 217 to 220; that stretch reads DEVQ. Lysine 246 carries the N6-(pyridoxal phosphate)lysine modification. Serine 274 serves as a coordination point for N(2)-acetyl-L-ornithine. Threonine 275 lines the pyridoxal 5'-phosphate pocket.

Belongs to the class-III pyridoxal-phosphate-dependent aminotransferase family. ArgD subfamily. As to quaternary structure, homodimer. Pyridoxal 5'-phosphate is required as a cofactor.

It localises to the cytoplasm. The catalysed reaction is N(2)-acetyl-L-ornithine + 2-oxoglutarate = N-acetyl-L-glutamate 5-semialdehyde + L-glutamate. It participates in amino-acid biosynthesis; L-arginine biosynthesis; N(2)-acetyl-L-ornithine from L-glutamate: step 4/4. This is Acetylornithine aminotransferase from Streptomyces clavuligerus.